The primary structure comprises 354 residues: Uroporphyrinogen decarboxylase (354 aa).

Residues 27-31 (RQAGR), Asp-77, Tyr-154, Thr-209, and His-327 contribute to the substrate site.

The protein belongs to the uroporphyrinogen decarboxylase family. As to quaternary structure, homodimer.

Its subcellular location is the cytoplasm. It carries out the reaction uroporphyrinogen III + 4 H(+) = coproporphyrinogen III + 4 CO2. Its pathway is porphyrin-containing compound metabolism; protoporphyrin-IX biosynthesis; coproporphyrinogen-III from 5-aminolevulinate: step 4/4. Functionally, catalyzes the decarboxylation of four acetate groups of uroporphyrinogen-III to yield coproporphyrinogen-III. The protein is Uroporphyrinogen decarboxylase of Salmonella arizonae (strain ATCC BAA-731 / CDC346-86 / RSK2980).